The following is a 675-amino-acid chain: Protein kintoun (675 aa).

Disordered regions lie at residues 98–131 (ASKKQQQEQEKQEKEQQQQAAGAGKPEGPGKQGA), 265–293 (AGEGAGGRVRPRPDVPGVPDLPGAKTAPP), 310–340 (EGGAGSSSRSTFSFDKSRKAGGTEAAGAVAK), and 509–659 (EAAH…AAPT). Over residues 102–113 (QQQEQEKQEKEQ) the composition is skewed to basic and acidic residues. Residues 279 to 293 (VPGVPDLPGAKTAPP) are compositionally biased toward low complexity. A compositionally biased stretch (low complexity) spans 529 to 543 (AAAASSGAAPAPAAA). A compositionally biased stretch (acidic residues) spans 544 to 553 (SEEEEEEDKE). A compositionally biased stretch (low complexity) spans 564–577 (DPAAAAAAAGASSG). Basic and acidic residues predominate over residues 579-596 (ELTENERKWRELHARQQQ). Composition is skewed to low complexity over residues 604–617 (AAEAAAAAAAAAAE) and 628–659 (VAQGGAAAAAESVAAAKQQVQQQPVAAAAAPT).

Belongs to the PIH1 family. Kintoun subfamily.

It is found in the cytoplasm. In terms of biological role, required for cytoplasmic pre-assembly of axonemal dyneins, thereby playing a central role in motility in cilia and flagella. Involved in pre-assembly of dynein arm complexes in the cytoplasm before intraflagellar transport loads them for the ciliary compartment. The sequence is that of Protein kintoun (pf13) from Chlamydomonas reinhardtii (Chlamydomonas smithii).